We begin with the raw amino-acid sequence, 193 residues long: Ion-translocating oxidoreductase complex subunit A (193 aa).

A run of 6 helical transmembrane segments spans residues 4–24, 39–59, 72–92, 102–122, 134–154, and 171–191; these read LLLI…RFLG, LGMG…TWVL, LQTI…EMIV, SLGI…LAVL, LVFA…FAGL, and PIEL…AGLV.

The protein belongs to the NqrDE/RnfAE family. As to quaternary structure, the complex is composed of six subunits: RnfA, RnfB, RnfC, RnfD, RnfE and RnfG.

Its subcellular location is the cell inner membrane. In terms of biological role, part of a membrane-bound complex that couples electron transfer with translocation of ions across the membrane. In Syntrophotalea carbinolica (strain DSM 2380 / NBRC 103641 / GraBd1) (Pelobacter carbinolicus), this protein is Ion-translocating oxidoreductase complex subunit A.